A 59-amino-acid chain; its full sequence is Large ribosomal subunit protein uL30 (59 aa).

The protein belongs to the universal ribosomal protein uL30 family. As to quaternary structure, part of the 50S ribosomal subunit.

This Enterococcus faecalis (strain ATCC 700802 / V583) protein is Large ribosomal subunit protein uL30.